Consider the following 443-residue polypeptide: Trigger factor (443 aa).

Residues glycine 169–proline 254 form the PPIase FKBP-type domain.

This sequence belongs to the FKBP-type PPIase family. Tig subfamily.

The protein resides in the cytoplasm. It carries out the reaction [protein]-peptidylproline (omega=180) = [protein]-peptidylproline (omega=0). Functionally, involved in protein export. Acts as a chaperone by maintaining the newly synthesized protein in an open conformation. Functions as a peptidyl-prolyl cis-trans isomerase. The protein is Trigger factor of Mycoplasmoides gallisepticum (strain R(low / passage 15 / clone 2)) (Mycoplasma gallisepticum).